The following is a 398-amino-acid chain: Phosphoglycerate kinase (398 aa).

Substrate-binding positions include Asp21 to Asn23, Arg36, His59 to Arg62, Arg119, and Arg157. ATP is bound by residues Lys208, Gly296, Glu327, and Gly354 to Ser357.

The protein belongs to the phosphoglycerate kinase family. In terms of assembly, monomer.

Its subcellular location is the cytoplasm. It catalyses the reaction (2R)-3-phosphoglycerate + ATP = (2R)-3-phospho-glyceroyl phosphate + ADP. It participates in carbohydrate degradation; glycolysis; pyruvate from D-glyceraldehyde 3-phosphate: step 2/5. The protein is Phosphoglycerate kinase of Streptococcus pneumoniae serotype 4 (strain ATCC BAA-334 / TIGR4).